The following is a 385-amino-acid chain: Mitochondrial fission regulator 2 (385 aa).

N-acetylserine is present on Ser2. Position 119 is a phosphoserine (Ser119). Residues Ser195–Lys268 are disordered. Residues Ser207–Pro216 are compositionally biased toward pro residues. The span at Pro231–Asn257 shows a compositional bias: polar residues. A phosphoserine mark is found at Ser291 and Ser328. The tract at residues Lys331 to Glu363 is disordered. The segment covering Trp336–Thr346 has biased composition (polar residues).

Belongs to the MTFR1 family.

The protein resides in the mitochondrion. May play a role in mitochondrial aerobic respiration essentially in the testis. Can also promote mitochondrial fission. In Homo sapiens (Human), this protein is Mitochondrial fission regulator 2 (MTFR2).